We begin with the raw amino-acid sequence, 201 residues long: Recombination protein RecR (201 aa).

The C4-type zinc-finger motif lies at 59–74 (CKICGNIDTENICRIC). Positions 82 to 177 (SIIAIVETVA…KISRLASGIP (96 aa)) constitute a Toprim domain.

The protein belongs to the RecR family.

Its function is as follows. May play a role in DNA repair. It seems to be involved in an RecBC-independent recombinational process of DNA repair. It may act with RecF and RecO. In Rickettsia massiliae (strain Mtu5), this protein is Recombination protein RecR.